A 452-amino-acid polypeptide reads, in one-letter code: Zinc finger protein 672 (452 aa).

4 C2H2-type zinc fingers span residues 14–36 (YSCS…ERAH), 42–64 (FRCL…RRTH), 70–92 (YICS…LGAH), and 99–122 (CPCR…RRQH). Residues 128-150 (RRCPLCARTFRQSALLFHQARAH) form a C2H2-type 5; degenerate zinc finger. 9 consecutive C2H2-type zinc fingers follow at residues 163 to 185 (HRCA…ARIH), 199 to 221 (HQCG…LQTH), 227 to 249 (FKCP…QRTH), 255 to 277 (YACG…RRSH), 283 to 305 (HACA…QRIH), 311 to 333 (FACP…RRTH), 339 to 361 (YRCE…RRNH), 367 to 389 (HKCP…RKTH), and 395 to 417 (AECA…QRAH).

The protein belongs to the krueppel C2H2-type zinc-finger protein family.

It localises to the nucleus. Functionally, may be involved in transcriptional regulation. The chain is Zinc finger protein 672 from Homo sapiens (Human).